A 406-amino-acid chain; its full sequence is Phosphopentomutase (406 aa).

The Mn(2+) site is built by Asp10, Asp305, His310, Asp346, His347, and His358.

This sequence belongs to the phosphopentomutase family. Mn(2+) is required as a cofactor.

The protein localises to the cytoplasm. It carries out the reaction 2-deoxy-alpha-D-ribose 1-phosphate = 2-deoxy-D-ribose 5-phosphate. The catalysed reaction is alpha-D-ribose 1-phosphate = D-ribose 5-phosphate. It functions in the pathway carbohydrate degradation; 2-deoxy-D-ribose 1-phosphate degradation; D-glyceraldehyde 3-phosphate and acetaldehyde from 2-deoxy-alpha-D-ribose 1-phosphate: step 1/2. In terms of biological role, isomerase that catalyzes the conversion of deoxy-ribose 1-phosphate (dRib-1-P) and ribose 1-phosphate (Rib-1-P) to deoxy-ribose 5-phosphate (dRib-5-P) and ribose 5-phosphate (Rib-5-P), respectively. The chain is Phosphopentomutase from Aliivibrio salmonicida (strain LFI1238) (Vibrio salmonicida (strain LFI1238)).